The following is a 347-amino-acid chain: Heme A synthase (347 aa).

8 helical membrane passes run 14-34, 95-115, 125-145, 166-186, 198-218, 260-280, 289-309, and 311-331; these read VKVW…VGGI, YFHR…FLYF, LIVN…MGWL, LLLA…AVIL, LIFY…SLVA, FIHE…LLIL, LLLV…IYNV, and IALA…NTYL. H262 serves as a coordination point for heme. H317 is a heme binding site.

This sequence belongs to the COX15/CtaA family. Type 2 subfamily. In terms of assembly, interacts with CtaB. Heme b serves as cofactor.

It is found in the cell membrane. It catalyses the reaction Fe(II)-heme o + 2 A + H2O = Fe(II)-heme a + 2 AH2. It participates in porphyrin-containing compound metabolism; heme A biosynthesis; heme A from heme O: step 1/1. Its function is as follows. Catalyzes the conversion of heme O to heme A by two successive hydroxylations of the methyl group at C8. The first hydroxylation forms heme I, the second hydroxylation results in an unstable dihydroxymethyl group, which spontaneously dehydrates, resulting in the formyl group of heme A. The polypeptide is Heme A synthase (Ehrlichia canis (strain Jake)).